A 732-amino-acid chain; its full sequence is Elongation factor 2 (732 aa).

Residues 19–260 (ERIRNMGIAA…MVVKHLPNPL (242 aa)) enclose the tr-type G domain. Residues 28-35 (AHIDHGKT), 94-98 (DTPGH), and 148-151 (NKVD) each bind GTP. Position 597 is a diphthamide (His-597).

The protein belongs to the TRAFAC class translation factor GTPase superfamily. Classic translation factor GTPase family. EF-G/EF-2 subfamily.

Its subcellular location is the cytoplasm. Its function is as follows. Catalyzes the GTP-dependent ribosomal translocation step during translation elongation. During this step, the ribosome changes from the pre-translocational (PRE) to the post-translocational (POST) state as the newly formed A-site-bound peptidyl-tRNA and P-site-bound deacylated tRNA move to the P and E sites, respectively. Catalyzes the coordinated movement of the two tRNA molecules, the mRNA and conformational changes in the ribosome. This is Elongation factor 2 from Thermococcus kodakarensis (strain ATCC BAA-918 / JCM 12380 / KOD1) (Pyrococcus kodakaraensis (strain KOD1)).